The sequence spans 503 residues: Maturase K (503 aa).

It belongs to the intron maturase 2 family. MatK subfamily.

It is found in the plastid. The protein localises to the chloroplast. Functionally, usually encoded in the trnK tRNA gene intron. Probably assists in splicing its own and other chloroplast group II introns. The sequence is that of Maturase K from Callistemon polandii (Gold-tipped bottlebrush).